The following is a 489-amino-acid chain: Betaine aldehyde dehydrogenase (489 aa).

Asparagine 93 is a K(+) binding site. An NAD(+)-binding site is contributed by 150-152; sequence GAW. Lysine 162 acts as the Charge relay system in catalysis. Residue 176–179 coordinates NAD(+); that stretch reads KPSE. Valine 180 contacts K(+). Residue 229 to 232 participates in NAD(+) binding; sequence EVGT. Leucine 245 contacts K(+). Glutamate 251 acts as the Proton acceptor in catalysis. The NAD(+) site is built by glycine 253, cysteine 285, and glutamate 386. Cysteine 285 functions as the Nucleophile in the catalytic mechanism. Cysteine 285 carries the cysteine sulfenic acid (-SOH) modification. Residues lysine 456 and glycine 459 each contribute to the K(+) site. Glutamate 463 serves as the catalytic Charge relay system.

It belongs to the aldehyde dehydrogenase family. In terms of assembly, dimer of dimers. K(+) serves as cofactor.

The enzyme catalyses betaine aldehyde + NAD(+) + H2O = glycine betaine + NADH + 2 H(+). The protein operates within amine and polyamine biosynthesis; betaine biosynthesis via choline pathway; betaine from betaine aldehyde: step 1/1. Involved in the biosynthesis of the osmoprotectant glycine betaine. Catalyzes the irreversible oxidation of betaine aldehyde to the corresponding acid. This Chromohalobacter salexigens (strain ATCC BAA-138 / DSM 3043 / CIP 106854 / NCIMB 13768 / 1H11) protein is Betaine aldehyde dehydrogenase.